A 281-amino-acid polypeptide reads, in one-letter code: 4-diphosphocytidyl-2-C-methyl-D-erythritol kinase (281 aa).

The active site involves Lys-11. An ATP-binding site is contributed by 92–102 (LVSAGLAGGSA). Residue Asp-132 is part of the active site.

This sequence belongs to the GHMP kinase family. IspE subfamily.

The catalysed reaction is 4-CDP-2-C-methyl-D-erythritol + ATP = 4-CDP-2-C-methyl-D-erythritol 2-phosphate + ADP + H(+). It functions in the pathway isoprenoid biosynthesis; isopentenyl diphosphate biosynthesis via DXP pathway; isopentenyl diphosphate from 1-deoxy-D-xylulose 5-phosphate: step 3/6. Its function is as follows. Catalyzes the phosphorylation of the position 2 hydroxy group of 4-diphosphocytidyl-2C-methyl-D-erythritol. The chain is 4-diphosphocytidyl-2-C-methyl-D-erythritol kinase from Ehrlichia ruminantium (strain Gardel).